The following is a 77-amino-acid chain: Translation initiation factor IF-1, chloroplastic (77 aa).

Residues 1–71 (MKEQKLIHEG…TRGRIIYRLR (71 aa)) form the S1-like domain.

The protein belongs to the IF-1 family. Component of the 30S ribosomal translation pre-initiation complex which assembles on the 30S ribosome in the order IF-2 and IF-3, IF-1 and N-formylmethionyl-tRNA(fMet); mRNA recruitment can occur at any time during PIC assembly.

The protein resides in the plastid. Its subcellular location is the chloroplast. In terms of biological role, one of the essential components for the initiation of protein synthesis. Stabilizes the binding of IF-2 and IF-3 on the 30S subunit to which N-formylmethionyl-tRNA(fMet) subsequently binds. Helps modulate mRNA selection, yielding the 30S pre-initiation complex (PIC). Upon addition of the 50S ribosomal subunit IF-1, IF-2 and IF-3 are released leaving the mature 70S translation initiation complex. The polypeptide is Translation initiation factor IF-1, chloroplastic (Acorus calamus var. americanus (American sweet flag)).